We begin with the raw amino-acid sequence, 140 residues long: Small ribosomal subunit protein uS12 (140 aa).

2 disordered regions span residues 36–56 and 117–140; these read TYNP…MTPK and TSGV…EKKE.

This sequence belongs to the universal ribosomal protein uS12 family. Part of the 30S ribosomal subunit. Contacts proteins S8 and S17. May interact with IF1 in the 30S initiation complex.

Its function is as follows. With S4 and S5 plays an important role in translational accuracy. In terms of biological role, interacts with and stabilizes bases of the 16S rRNA that are involved in tRNA selection in the A site and with the mRNA backbone. Located at the interface of the 30S and 50S subunits, it traverses the body of the 30S subunit contacting proteins on the other side and probably holding the rRNA structure together. The combined cluster of proteins S8, S12 and S17 appears to hold together the shoulder and platform of the 30S subunit. This is Small ribosomal subunit protein uS12 from Malacoplasma penetrans (strain HF-2) (Mycoplasma penetrans).